The chain runs to 325 residues: Putative HTH-type transcriptional regulatory protein HQ_3058A (325 aa).

Residues 132-186 form the HTH cro/C1-type domain; it reads LADEREERGWSLGRLATELGVSRRTVSKYEDGMNASIEIAIQLEEVFDEPFSSPL. Residues 143-162 constitute a DNA-binding region (H-T-H motif); that stretch reads LGRLATELGVSRRTVSKYED. Positions 189–211 are disordered; sequence MEGAESVRDSEPTPDDPDPDADD. Residues 200–211 show a composition bias toward acidic residues; the sequence is PTPDDPDPDADD.

The polypeptide is Putative HTH-type transcriptional regulatory protein HQ_3058A (Haloquadratum walsbyi (strain DSM 16790 / HBSQ001)).